An 802-amino-acid chain; its full sequence is MDLKYSASHCNLSSDMKLRRFHQHRGKGREEEYDASSLSLNNLSKLILPPLGVASYNQNHIRSSGWIISPMDSRYRCWEFYMVLLVAYSAWVYPFEVAFLNSSPKRNLCIADNIVDLFFAVDIVLTFFVAYIDERTQLLVREPKQIAVRYLSTWFLMDVASTIPFDAIGYLITGTSTLNITCNLLGLLRFWRLRRVKHLFTRLEKDIRYSYFWIRCFRLLSVTLFLVHCAGCSYYLIADRYPHQGKTWTDAIPNFTETSLSIRYIAAIYWSITTMTTVGYGDLHASNTIEMVFITVYMLFNLGLTAYLIGNMTNLVVEGTRRTMEFRNSIEAASNFVNRNRLPPRLKDQILAYMCLRFKAESLNQQHLIDQLPKSIYKSICQHLFLPSVEKVYLFKGVSREILLLLVSKMKAEYIPPREDVIMQNEAPDDVYIIVSGEVEIIDSEMERESVLGTLRCGDIFGEVGALCCRPQSYTFQTKSLSQLLRLKTSFLIETMQIKQQDNATMLKNFLQHHKKLSNLDIGDLKAQQNGENTDVVPPNIASNLIAVVTTGNAALLDELLKAKLSPDITDSKGKTPLHVAASRGYEDCVLVLLKHGCNIHIRDVNGNSALWEAIISKHYEIFRILYHFAAISDPHIAGDLLCEAAKQNNVEVMKALLKQGLNVDTEDHHGVTALQVAMAEDQMDMVNLLATNGADVVCVNTHNEFTPLEKLRVVEEEEEEERGRVSIYRGHPLERRERSCNEAGKLILLPPSLDDLKKIAGEKFGFDGSETMVTNEDGAEIDSIEVIRDNDKLYFVVNKII.

The Cytoplasmic portion of the chain corresponds to M1–E79. Residues F80–L100 form a helical membrane-spanning segment. Residues N101–C109 are Extracellular-facing. The helical transmembrane segment at I110 to A130 threads the bilayer. At Y131–T153 the chain is on the cytoplasmic side. Residues W154–G174 traverse the membrane as a helical segment. Residues T175–N183 are Extracellular-facing. An N-linked (GlcNAc...) asparagine glycan is attached at N179. The helical; Voltage-sensor transmembrane segment at L184–E204 threads the bilayer. Over K205–R218 the chain is Cytoplasmic. The chain crosses the membrane as a helical span at residues L219–D239. At R240–I265 the chain is on the extracellular side. Residue N254 is glycosylated (N-linked (GlcNAc...) asparagine). An intramembrane region (pore-forming) is located at residues A266–A285. Over S286–T288 the chain is Extracellular. The helical transmembrane segment at I289–I309 threads the bilayer. Residues G310–I802 are Cytoplasmic-facing. L394 to H513 serves as a coordination point for a nucleoside 3',5'-cyclic phosphate. ANK repeat units lie at residues N540–I569, K573–I602, N606–H636, I637–T666, and H670–C699. The KHA domain maps to R725–I802.

Belongs to the potassium channel family. Plant (TC 1.A.1.4) subfamily. As to quaternary structure, the potassium channel is probably composed of a homo- or heterotetrameric complex of pore-forming subunits. Interacts with the phosphatase PPC2A and the kinase CIPK6. May interact with AKT1, KAT1 and KAT3. Interacts with SLAC1. In terms of processing, dephosphorylated by PP2CA. Expressed mainly in the phloem tissues throughout the plant but also, at a lower level, in leaf epiderm, mesophyll and guard cells.

Its subcellular location is the endoplasmic reticulum membrane. Functionally, highly selective and weak inward-rectifying potassium channel. Plays a role in both loading and unloading potassium into/from the phloem sap. Seems to control sugar loading into phloem via a voltage-dependent process. Blocked by physiological concentrations of external calcium and by external acidification. May interact with the cytoskeleton or with regulatory proteins. Dephosphorylation by PP2CA not only leads to the inhibition of potassium currents but also to an increase of the voltage-dependence of the channel. Regulated by the CBL4/CIPK6 calcium sensor/protein kinase complex via a kinase interaction-dependent but phosphorylation-independent translocation of the channel to the plasma membrane. In Arabidopsis thaliana (Mouse-ear cress), this protein is Potassium channel AKT2/3 (AKT2).